A 622-amino-acid polypeptide reads, in one-letter code: MALLQISEPGQSTAPHQHRLAVGIDLGTTNSLVATVRSGLSTVLLDEAGKALLPSVVHYAANGQVEVGYAAQRQQSHDPQNTIASAKRFLGRGLNDIGDTSHLPYQFVDVPGMVQIETRAGIKSPVEISAEILKSLKARAEQALGGELTGAVITVPAYFDDAQRQATKDAARIAGINVLRLLNEPTAAAIAYGLDNASEGIYVVYDLGGGTFDVSILRLTKGVFEVLSTNGDSALGGDDFDRRIFHWILEQTHLQAPNPADTRLLMTASKEAKEWLTEHTSANIAVTLSNGKTVDLSLSRTEFHSLTQPLLNRTLVPIRKALRDASLTVKEVKGIVLVGGATRMPQVQQAVADFFGQAPLTNLDPDQVVALGAAIQANILAGNRHDDELLLLDVIPLSLGLETMGGLVEKIIPRNSTLPIARAQDFTTFKDGQTAMSIHVLQGEREMVADCRSLGRFELRGIPPMAAGAARIRVTFQVDADGLLSVSAQEQTSGAHANIVVKPSYGLSEEQITNMLQASFTAAEADKHARALQEARVDAARLLEALEAALRQDGDKLLNDEERTEITRQMEHLRNIAQHEDSDAINKAVDALNHATETFAARRMDASVKQALAGQSLNTLDI.

Belongs to the heat shock protein 70 family.

In terms of biological role, chaperone involved in the maturation of iron-sulfur cluster-containing proteins. Has a low intrinsic ATPase activity which is markedly stimulated by HscB. The protein is Chaperone protein HscA homolog of Methylobacillus flagellatus (strain ATCC 51484 / DSM 6875 / VKM B-1610 / KT).